Here is a 366-residue protein sequence, read N- to C-terminus: 3-dehydroquinate synthase (366 aa).

Residues Asp-69–Lys-74, Gly-103–Asp-107, Thr-127–Thr-128, Lys-140, Lys-149, and Thr-167–Thr-170 contribute to the NAD(+) site. Residues Glu-182, His-245, and His-262 each coordinate Zn(2+).

The protein belongs to the sugar phosphate cyclases superfamily. Dehydroquinate synthase family. Co(2+) is required as a cofactor. It depends on Zn(2+) as a cofactor. NAD(+) serves as cofactor.

It is found in the cytoplasm. The catalysed reaction is 7-phospho-2-dehydro-3-deoxy-D-arabino-heptonate = 3-dehydroquinate + phosphate. The protein operates within metabolic intermediate biosynthesis; chorismate biosynthesis; chorismate from D-erythrose 4-phosphate and phosphoenolpyruvate: step 2/7. In terms of biological role, catalyzes the conversion of 3-deoxy-D-arabino-heptulosonate 7-phosphate (DAHP) to dehydroquinate (DHQ). The protein is 3-dehydroquinate synthase of Pseudomonas fluorescens (strain SBW25).